A 188-amino-acid polypeptide reads, in one-letter code: Elongation factor P (188 aa).

Residue Lys-34 is modified to N6-(3,6-diaminohexanoyl)-5-hydroxylysine.

The protein belongs to the elongation factor P family. In terms of processing, may be beta-lysylated on the epsilon-amino group of Lys-34 by the combined action of EpmA and EpmB, and then hydroxylated on the C5 position of the same residue by EpmC (if this protein is present). Lysylation is critical for the stimulatory effect of EF-P on peptide-bond formation. The lysylation moiety may extend toward the peptidyltransferase center and stabilize the terminal 3-CCA end of the tRNA. Hydroxylation of the C5 position on Lys-34 may allow additional potential stabilizing hydrogen-bond interactions with the P-tRNA.

The protein localises to the cytoplasm. It participates in protein biosynthesis; polypeptide chain elongation. Involved in peptide bond synthesis. Alleviates ribosome stalling that occurs when 3 or more consecutive Pro residues or the sequence PPG is present in a protein, possibly by augmenting the peptidyl transferase activity of the ribosome. Modification of Lys-34 is required for alleviation. This Actinobacillus pleuropneumoniae serotype 5b (strain L20) protein is Elongation factor P.